The sequence spans 119 residues: Large ribosomal subunit protein bL17 (119 aa).

The protein belongs to the bacterial ribosomal protein bL17 family. As to quaternary structure, part of the 50S ribosomal subunit. Contacts protein L32.

The protein is Large ribosomal subunit protein bL17 of Psychrobacter arcticus (strain DSM 17307 / VKM B-2377 / 273-4).